Reading from the N-terminus, the 687-residue chain is Glycine--tRNA ligase beta subunit (687 aa).

It belongs to the class-II aminoacyl-tRNA synthetase family. Tetramer of two alpha and two beta subunits.

The protein resides in the cytoplasm. It catalyses the reaction tRNA(Gly) + glycine + ATP = glycyl-tRNA(Gly) + AMP + diphosphate. The sequence is that of Glycine--tRNA ligase beta subunit from Neisseria gonorrhoeae (strain NCCP11945).